The following is a 447-amino-acid chain: Tubulin beta-2 chain (447 aa).

GTP is bound by residues Q11, E69, S138, G142, T143, G144, N204, and N226. E69 is a binding site for Mg(2+). The interval 426 to 447 (QDAGVDEEEEEYEDDAPLEEEV) is disordered. Positions 429–447 (GVDEEEEEYEDDAPLEEEV) are enriched in acidic residues.

This sequence belongs to the tubulin family. As to quaternary structure, dimer of alpha and beta chains. A typical microtubule is a hollow water-filled tube with an outer diameter of 25 nm and an inner diameter of 15 nM. Alpha-beta heterodimers associate head-to-tail to form protofilaments running lengthwise along the microtubule wall with the beta-tubulin subunit facing the microtubule plus end conferring a structural polarity. Microtubules usually have 13 protofilaments but different protofilament numbers can be found in some organisms and specialized cells. The cofactor is Mg(2+).

It is found in the cytoplasm. It localises to the cytoskeleton. In terms of biological role, tubulin is the major constituent of microtubules, a cylinder consisting of laterally associated linear protofilaments composed of alpha- and beta-tubulin heterodimers. Microtubules grow by the addition of GTP-tubulin dimers to the microtubule end, where a stabilizing cap forms. Below the cap, tubulin dimers are in GDP-bound state, owing to GTPase activity of alpha-tubulin. The polypeptide is Tubulin beta-2 chain (TUB2) (Colletotrichum graminicola (Maize anthracnose fungus)).